We begin with the raw amino-acid sequence, 97 residues long: RxLR effector protein PexRD21 (97 aa).

The first 21 residues, 1 to 21, serve as a signal peptide directing secretion; sequence MRLSYILVVVIAVTLQACVCA. The RxLR-dEER signature appears at 48-66; that stretch reads RLLRGVKKRTAEREVQEER.

It belongs to the RxLR effector family.

The protein resides in the secreted. The protein localises to the host cell membrane. Effector that is involved in host plant infection. Contributes to virulence during the early infection stage, by inhibiting plant defense responses induced by both PAMP-triggered immunity (PTI) and effector-triggered immunity (ETI). This Phytophthora infestans (strain T30-4) (Potato late blight agent) protein is RxLR effector protein PexRD21.